The sequence spans 497 residues: Tyrosine-protein kinase SPK-1 (497 aa).

A disordered region spans residues 1–25 (MGQKFSIKCKKQSKNKNTSKCQKIP). Residues 33–94 (PGSYMVKAKY…PSNYVSKQDG (62 aa)) form the SH3 domain. An SH2 domain is found at 100–200 (EAWREIQRWE…NTHIPLTDPM (101 aa)). A Protein kinase domain is found at 220 to 482 (IEILNEIGRG…LVLQEKMDLL (263 aa)). ATP is bound by residues 226-234 (IGRGFFGSV) and Lys248. Residue Asp342 is the Proton acceptor of the active site.

Belongs to the protein kinase superfamily. Tyr protein kinase family.

It catalyses the reaction L-tyrosyl-[protein] + ATP = O-phospho-L-tyrosyl-[protein] + ADP + H(+). This Girardia tigrina (Planarian) protein is Tyrosine-protein kinase SPK-1.